Consider the following 227-residue polypeptide: Large ribosomal subunit protein uL3 (227 aa).

Position 158 is an N5-methylglutamine (glutamine 158).

This sequence belongs to the universal ribosomal protein uL3 family. In terms of assembly, part of the 50S ribosomal subunit. Forms a cluster with proteins L14 and L19. Methylated by PrmB.

Its function is as follows. One of the primary rRNA binding proteins, it binds directly near the 3'-end of the 23S rRNA, where it nucleates assembly of the 50S subunit. The protein is Large ribosomal subunit protein uL3 of Polaromonas sp. (strain JS666 / ATCC BAA-500).